The chain runs to 1929 residues: Intraflagellar transport protein 140 (1929 aa).

2 WD repeats span residues 76 to 116 (QVQV…PSYK) and 119 to 158 (LHQEELCLIKWLSHGRILVTCDVSGQVILYKFSTDTYSFE). The interval 774 to 795 (LSTPDTGSPAVEAEESPQRQTR) is disordered. 3 LRR repeats span residues 957 to 980 (STSLNLLFVGSSMLFALKTGTFTK), 1019 to 1044 (ISLLQSIYISSEQRAKVPLLVQSLAE), and 1510 to 1532 (AQSLELCIKSNRMKELSNLLADI).

It localises to the cell projection. The protein localises to the cilium. The protein resides in the flagellum. It is found in the cytoplasm. Its subcellular location is the cytoskeleton. It localises to the flagellum axoneme. The protein localises to the flagellum basal body. Functionally, component of the intraflagellar transport complex A (IFT-A) involved in flagellar assembly. The protein is Intraflagellar transport protein 140 of Giardia intestinalis (strain ATCC 50803 / WB clone C6) (Giardia lamblia).